The following is a 208-amino-acid chain: LexA repressor (208 aa).

Residues 28–48 constitute a DNA-binding region (H-T-H motif); it reads RAEIARELGFRSANAAEEHLK. Catalysis depends on for autocatalytic cleavage activity residues serine 125 and lysine 162.

The protein belongs to the peptidase S24 family. As to quaternary structure, homodimer.

It catalyses the reaction Hydrolysis of Ala-|-Gly bond in repressor LexA.. Its function is as follows. Represses a number of genes involved in the response to DNA damage (SOS response), including recA and lexA. In the presence of single-stranded DNA, RecA interacts with LexA causing an autocatalytic cleavage which disrupts the DNA-binding part of LexA, leading to derepression of the SOS regulon and eventually DNA repair. This chain is LexA repressor, found in Aliivibrio fischeri (strain ATCC 700601 / ES114) (Vibrio fischeri).